A 433-amino-acid chain; its full sequence is UDP-N-acetylglucosamine 1-carboxyvinyltransferase 1 (433 aa).

A phosphoenolpyruvate-binding site is contributed by 22-23 (KN). UDP-N-acetyl-alpha-D-glucosamine is bound at residue Arg-95. Cys-119 (proton donor) is an active-site residue. Cys-119 carries the post-translational modification 2-(S-cysteinyl)pyruvic acid O-phosphothioketal. UDP-N-acetyl-alpha-D-glucosamine contacts are provided by residues 124 to 128 (RPVDL), Asp-307, and Val-329.

It belongs to the EPSP synthase family. MurA subfamily.

It is found in the cytoplasm. The enzyme catalyses phosphoenolpyruvate + UDP-N-acetyl-alpha-D-glucosamine = UDP-N-acetyl-3-O-(1-carboxyvinyl)-alpha-D-glucosamine + phosphate. The protein operates within cell wall biogenesis; peptidoglycan biosynthesis. Functionally, cell wall formation. Adds enolpyruvyl to UDP-N-acetylglucosamine. The chain is UDP-N-acetylglucosamine 1-carboxyvinyltransferase 1 from Latilactobacillus sakei subsp. sakei (strain 23K) (Lactobacillus sakei subsp. sakei).